Reading from the N-terminus, the 184-residue chain is NADH-quinone oxidoreductase subunit B 1 (184 aa).

[4Fe-4S] cluster-binding residues include Cys37, Cys38, Cys103, and Cys132.

Belongs to the complex I 20 kDa subunit family. As to quaternary structure, NDH-1 is composed of 14 different subunits. Subunits NuoB, C, D, E, F, and G constitute the peripheral sector of the complex. [4Fe-4S] cluster serves as cofactor.

Its subcellular location is the cell membrane. The enzyme catalyses a quinone + NADH + 5 H(+)(in) = a quinol + NAD(+) + 4 H(+)(out). In terms of biological role, NDH-1 shuttles electrons from NADH, via FMN and iron-sulfur (Fe-S) centers, to quinones in the respiratory chain. The immediate electron acceptor for the enzyme in this species is believed to be a menaquinone. Couples the redox reaction to proton translocation (for every two electrons transferred, four hydrogen ions are translocated across the cytoplasmic membrane), and thus conserves the redox energy in a proton gradient. This is NADH-quinone oxidoreductase subunit B 1 from Streptomyces griseus subsp. griseus (strain JCM 4626 / CBS 651.72 / NBRC 13350 / KCC S-0626 / ISP 5235).